The sequence spans 240 residues: UDP-2,3-diacylglucosamine hydrolase (240 aa).

5 residues coordinate Mn(2+): Asp-8, His-10, Asp-41, Asn-79, and His-114. 79-80 (NR) provides a ligand contact to substrate. Asp-122, Ser-160, Asn-164, Lys-167, and His-195 together coordinate substrate. Residues His-195 and His-197 each coordinate Mn(2+).

Belongs to the LpxH family. The cofactor is Mn(2+).

It is found in the cell inner membrane. It catalyses the reaction UDP-2-N,3-O-bis[(3R)-3-hydroxytetradecanoyl]-alpha-D-glucosamine + H2O = 2-N,3-O-bis[(3R)-3-hydroxytetradecanoyl]-alpha-D-glucosaminyl 1-phosphate + UMP + 2 H(+). Its pathway is glycolipid biosynthesis; lipid IV(A) biosynthesis; lipid IV(A) from (3R)-3-hydroxytetradecanoyl-[acyl-carrier-protein] and UDP-N-acetyl-alpha-D-glucosamine: step 4/6. Hydrolyzes the pyrophosphate bond of UDP-2,3-diacylglucosamine to yield 2,3-diacylglucosamine 1-phosphate (lipid X) and UMP by catalyzing the attack of water at the alpha-P atom. Involved in the biosynthesis of lipid A, a phosphorylated glycolipid that anchors the lipopolysaccharide to the outer membrane of the cell. This Yersinia pestis bv. Antiqua (strain Angola) protein is UDP-2,3-diacylglucosamine hydrolase.